We begin with the raw amino-acid sequence, 200 residues long: Integrin beta-1-binding protein 1 (200 aa).

Basic residues predominate over residues Met-1–Ser-10. A disordered region spans residues Met-1–Ser-55. Residues Lys-6–Lys-7 carry the Nuclear localization signal motif. Low complexity predominate over residues Ser-11 to Ser-29. Positions Ser-34–Ser-55 are enriched in polar residues. Thr-38 carries the post-translational modification Phosphothreonine; by CaMK2. Ser-41 bears the Phosphoserine mark. A PID domain is found at Asp-58–Ser-200. The interval Tyr-136–Ile-139 is interaction with KRIT1. Positions Ile-139–Met-141 are interaction with ITGB1.

Found in a complex, at least composed of ITGB1BP1, KRIT1 and RAP1A. Interacts (via C-terminal region) with ITGB1 (via C-terminal cytoplasmic tail); the interaction prevents talin TLN1 binding to ITGB1 and KRIT1 and ITGB1 compete for the same binding site. Interacts with KRIT1 (via N-terminal NPXY motif); the interaction induces the opening conformation of KRIT1 and KRIT1 and ITGB1 compete for the same binding site. Isoform 2 does not interact with ITGB1. Interacts with CDC42 (GTP- or GDP-bound form); the interaction is increased with the CDC42-membrane bound forms and prevents both CDC42 activation and cell spreading. Interacts (via C-terminal domain region) with NME2. Interacts with FERMT2 and RAC1. Interacts (via N-terminus and PTB domain) with ROCK1. Phosphorylation at Thr-38 seems to enhance integrin alpha5beta1-mediated cell adhesion. The degree of phosphorylation is regulated by integrin-dependent cell-matrix interaction. As to expression, expressed in the brain.

It is found in the nucleus. The protein localises to the cytoplasm. Its subcellular location is the cytoskeleton. The protein resides in the cell membrane. It localises to the cell projection. It is found in the lamellipodium. The protein localises to the ruffle. Functionally, key regulator of the integrin-mediated cell-matrix interaction signaling by binding to the ITGB1 cytoplasmic tail and preventing the activation of integrin alpha-5/beta-1 (heterodimer of ITGA5 and ITGB1) by talin or FERMT1. Plays a role in cell proliferation, differentiation, spreading, adhesion and migration in the context of mineralization and bone development and angiogenesis. Stimulates cellular proliferation in a fibronectin-dependent manner. Involved in the regulation of beta-1 integrin-containing focal adhesion (FA) site dynamics by controlling its assembly rate during cell adhesion; inhibits beta-1 integrin clustering within FA by directly competing with talin TLN1, and hence stimulates osteoblast spreading and migration in a fibronectin- and/or collagen-dependent manner. Acts as a guanine nucleotide dissociation inhibitor (GDI) by regulating Rho family GTPases during integrin-mediated cell matrix adhesion; reduces the level of active GTP-bound form of both CDC42 and RAC1 GTPases upon cell adhesion to fibronectin. Stimulates the release of active CDC42 from the membranes to maintain it in an inactive cytoplasmic pool. Participates in the translocation of the Rho-associated protein kinase ROCK1 to membrane ruffles at cell leading edges of the cell membrane, leading to an increase of myoblast cell migration on laminin. Plays a role in bone mineralization at a late stage of osteoblast differentiation; modulates the dynamic formation of focal adhesions into fibrillar adhesions, which are adhesive structures responsible for fibronectin deposition and fibrillogenesis. Plays a role in blood vessel development; acts as a negative regulator of angiogenesis by attenuating endothelial cell proliferation and migration, lumen formation and sprouting angiogenesis by promoting AKT phosphorylation and inhibiting ERK1/2 phosphorylation through activation of the Notch signaling pathway. Promotes transcriptional activity of the MYC promoter. This Mus musculus (Mouse) protein is Integrin beta-1-binding protein 1 (Itgb1bp1).